A 353-amino-acid chain; its full sequence is Photosystem II protein D1 (353 aa).

Thr2 carries the N-acetylthreonine modification. Phosphothreonine is present on Thr2. A run of 3 helical transmembrane segments spans residues 29 to 46 (YIGWFGVLMIPTLLTATS), 118 to 133 (HFLLGVRCYMGREWEL), and 142 to 156 (WIAVAYSAPVAAATA). Chlorophyll a is bound at residue His118. Tyr126 provides a ligand contact to pheophytin a. Residues Asp170 and Glu189 each contribute to the [CaMn4O5] cluster site. A helical membrane pass occupies residues 197–218 (FHMLGVAGVFGGSLFSAMHGSL). Residue His198 coordinates chlorophyll a. A quinone-binding positions include His215 and 264–265 (SF). His215 contacts Fe cation. Position 272 (His272) interacts with Fe cation. Residues 274–288 (FLAAWPVIGIWFTSL) form a helical membrane-spanning segment. His332, Glu333, Asp342, and Ala344 together coordinate [CaMn4O5] cluster. Residues 345-353 (AVEAPSTIG) constitute a propeptide that is removed on maturation.

Belongs to the reaction center PufL/M/PsbA/D family. As to quaternary structure, PSII is composed of 1 copy each of membrane proteins PsbA, PsbB, PsbC, PsbD, PsbE, PsbF, PsbH, PsbI, PsbJ, PsbK, PsbL, PsbM, PsbT, PsbX, PsbY, PsbZ, Psb30/Ycf12, at least 3 peripheral proteins of the oxygen-evolving complex and a large number of cofactors. It forms dimeric complexes. The cofactor is The D1/D2 heterodimer binds P680, chlorophylls that are the primary electron donor of PSII, and subsequent electron acceptors. It shares a non-heme iron and each subunit binds pheophytin, quinone, additional chlorophylls, carotenoids and lipids. D1 provides most of the ligands for the Mn4-Ca-O5 cluster of the oxygen-evolving complex (OEC). There is also a Cl(-1) ion associated with D1 and D2, which is required for oxygen evolution. The PSII complex binds additional chlorophylls, carotenoids and specific lipids.. Post-translationally, tyr-161 forms a radical intermediate that is referred to as redox-active TyrZ, YZ or Y-Z. In terms of processing, C-terminally processed by CTPA; processing is essential to allow assembly of the oxygen-evolving complex and thus photosynthetic growth.

Its subcellular location is the plastid. The protein localises to the chloroplast thylakoid membrane. It catalyses the reaction 2 a plastoquinone + 4 hnu + 2 H2O = 2 a plastoquinol + O2. Photosystem II (PSII) is a light-driven water:plastoquinone oxidoreductase that uses light energy to abstract electrons from H(2)O, generating O(2) and a proton gradient subsequently used for ATP formation. It consists of a core antenna complex that captures photons, and an electron transfer chain that converts photonic excitation into a charge separation. The D1/D2 (PsbA/PsbD) reaction center heterodimer binds P680, the primary electron donor of PSII as well as several subsequent electron acceptors. The chain is Photosystem II protein D1 from Landoltia punctata (Dotted duckmeat).